Reading from the N-terminus, the 387-residue chain is Phosphoglycerate kinase (387 aa).

Residues 21–23, arginine 36, 60–63, arginine 114, and arginine 147 contribute to the substrate site; these read DLN and HLGR. Residues lysine 198, glutamate 313, and 339–342 contribute to the ATP site; that span reads GGDT.

It belongs to the phosphoglycerate kinase family. Monomer.

The protein localises to the cytoplasm. It catalyses the reaction (2R)-3-phosphoglycerate + ATP = (2R)-3-phospho-glyceroyl phosphate + ADP. It participates in carbohydrate degradation; glycolysis; pyruvate from D-glyceraldehyde 3-phosphate: step 2/5. This Baumannia cicadellinicola subsp. Homalodisca coagulata protein is Phosphoglycerate kinase.